Reading from the N-terminus, the 179-residue chain is Probable chorismate pyruvate-lyase (179 aa).

Substrate is bound by residues R82, L120, and E165.

This sequence belongs to the UbiC family.

It localises to the cytoplasm. It carries out the reaction chorismate = 4-hydroxybenzoate + pyruvate. It functions in the pathway cofactor biosynthesis; ubiquinone biosynthesis. In terms of biological role, removes the pyruvyl group from chorismate, with concomitant aromatization of the ring, to provide 4-hydroxybenzoate (4HB) for the ubiquinone pathway. In Vibrio cholerae serotype O1 (strain ATCC 39315 / El Tor Inaba N16961), this protein is Probable chorismate pyruvate-lyase.